The following is a 447-amino-acid chain: Putative branched-chain amino acid carrier protein SE_1090 (447 aa).

Helical transmembrane passes span 5–25, 40–60, 74–94, 114–134, 143–163, 193–213, 229–249, 290–310, 317–337, 350–370, 382–402, and 417–437; these read TWIIGFTLFAMFFGAGNLIFP, ILAFALTGIGLPLLGVVVGAL, PRFSLIFLIIIYLTIGPLFAI, GNLALFIFTVIYFLIVLYLCL, IGSLLTPLLLITIVAMIIKGF, GYLTMDAIASIAFSMIVVNAI, IIAGLIAAIALVFIYISLGYI, LLGIIVSLACLTTACGLIVSV, ILPKIPYKVFVIFFILVSFIL, VPVLSVIYPVAITVILLILIA, IPLIIVAIESILSLITTQGWI, and LEWFPIAVVATLVGYMISYFV.

This sequence belongs to the branched chain amino acid transporter family.

It is found in the cell membrane. Its function is as follows. Component of the transport system for branched-chain amino acids (leucine, isoleucine and valine), which is coupled to a proton motive force. The sequence is that of Putative branched-chain amino acid carrier protein SE_1090 from Staphylococcus epidermidis (strain ATCC 12228 / FDA PCI 1200).